The chain runs to 245 residues: MKMKQISDTTLKITMSLEDLMDRGMEIADFLVPQEKTEEFFYAILDELEMPDSFLDTGMLSFRVTPKPDKVDVFVTKSKIDQNLDFEDLSDLPDMEELAQMSPDEFIKTLEKSIADKTKDDIEAIQSLEQVEAKEEEQEQAEQEAESKKEPYIYYILSFAKLADLVVFAKTVTFEMETSELYKMNERYYLTILVDIENHPSPYPAWLLARMREFADDSDISRSVLQEYGQVLMSHDAVLNLQKIG.

This sequence belongs to the MecA family. Homodimer.

In terms of biological role, enables the recognition and targeting of unfolded and aggregated proteins to the ClpC protease or to other proteins involved in proteolysis. The chain is Adapter protein MecA from Streptococcus pneumoniae serotype 19F (strain G54).